The sequence spans 575 residues: Sulfite reductase [NADPH] hemoprotein beta-component (575 aa).

Cys438, Cys444, Cys484, and Cys488 together coordinate [4Fe-4S] cluster. Siroheme is bound at residue Cys488.

Belongs to the nitrite and sulfite reductase 4Fe-4S domain family. Alpha(8)-beta(8). The alpha component is a flavoprotein, the beta component is a hemoprotein. Siroheme is required as a cofactor. Requires [4Fe-4S] cluster as cofactor.

The enzyme catalyses hydrogen sulfide + 3 NADP(+) + 3 H2O = sulfite + 3 NADPH + 4 H(+). The protein operates within sulfur metabolism; hydrogen sulfide biosynthesis; hydrogen sulfide from sulfite (NADPH route): step 1/1. Functionally, component of the sulfite reductase complex that catalyzes the 6-electron reduction of sulfite to sulfide. This is one of several activities required for the biosynthesis of L-cysteine from sulfate. The chain is Sulfite reductase [NADPH] hemoprotein beta-component from Vibrio atlanticus (strain LGP32) (Vibrio splendidus (strain Mel32)).